The following is a 132-amino-acid chain: Vesicle transport protein GOT1A (132 aa).

Topologically, residues 1–16 (MISITEWQKIGVGTTG) are cytoplasmic. The chain crosses the membrane as a helical span at residues 17–37 (FGIFFILFGMLLYFDSVLLAF). Topologically, residues 38–39 (GN) are lumenal. Residues 40–60 (LLFLTGLSLIIGLRRTFSFFF) form a helical membrane-spanning segment. At 61–68 (QRHKFKGT) the chain is on the cytoplasmic side. The chain crosses the membrane as a helical span at residues 69–89 (SFFLGGVVIVLLRWPLLGMCL). The Lumenal portion of the chain corresponds to 90-100 (ETYGFFSLFRG). The helical transmembrane segment at 101–121 (FFPVAFGFLGSASNIPFLSAL) threads the bilayer. The Cytoplasmic portion of the chain corresponds to 122–132 (FQRLQGTSSMV).

It belongs to the GOT1 family.

It localises to the golgi apparatus membrane. In terms of biological role, may be involved in fusion of ER-derived transport vesicles with the Golgi complex. The polypeptide is Vesicle transport protein GOT1A (Bos taurus (Bovine)).